We begin with the raw amino-acid sequence, 678 residues long: Methionine--tRNA ligase (678 aa).

The 'HIGH' region signature appears at 14-24; the sequence is PYANGSIHLGH. Zn(2+) is bound by residues Cys-145, Cys-148, Cys-158, and Cys-161. The short motif at 331–335 is the 'KMSKS' region element; it reads KMSKS. An ATP-binding site is contributed by Lys-334. The tRNA-binding domain occupies 576–678; sequence AFAAVDLRIA…SGAKPGQRVK (103 aa).

It belongs to the class-I aminoacyl-tRNA synthetase family. MetG type 1 subfamily. Homodimer. Zn(2+) serves as cofactor.

The protein localises to the cytoplasm. It catalyses the reaction tRNA(Met) + L-methionine + ATP = L-methionyl-tRNA(Met) + AMP + diphosphate. Functionally, is required not only for elongation of protein synthesis but also for the initiation of all mRNA translation through initiator tRNA(fMet) aminoacylation. The sequence is that of Methionine--tRNA ligase from Ectopseudomonas mendocina (strain ymp) (Pseudomonas mendocina).